Here is a 512-residue protein sequence, read N- to C-terminus: MSKRVVIFDTTLRDGEQSPGVSLNLHEKLEIAQQLARLGVDVIEAGFPIASPGDFEAVKAVAEQVRGPVICALARANRKDIERAAEALRGAEEARIHTFIATSPIHMQHKLRMEPDKVLDTAVDAVKLAKSFTSNVEFSAEDAFRSDVGFLCRIFSAAIEAGATTINIPDTVGYATPQEFGAFIKAIINGTPNIDKAIVSVHCHNDLGLAVANTLAALENGALQVEGTINGIGERAGNASLEEVIMALYTRKPFYNLETSINKSEIYRTSRLVSNLTGMLVQPNKAIVGKNAFAHESGIHQDGVLKERTTYEIMNPEMIGIFTNNIVLGKHSGRHAFRERLKELGYSLDDEKLTKAFARFKALADRKREITDEDLVVLVEDELRAFPEAYSLEYLHITSGTVLVPTATVRLRREEENFEEASCGDGPVDAAYKAIEKITGTGARLASYAISATTAGEDSQGEVSVKLEREGRFYTGRGVDTDIIVASAKAYLNAVNKIVFDGLPKAKTERAV.

Residues 5–267 enclose the Pyruvate carboxyltransferase domain; it reads VVIFDTTLRD…ETSINKSEIY (263 aa). Residues D14, H202, H204, and N238 each coordinate Mn(2+). Positions 391–512 are regulatory domain; sequence SLEYLHITSG…LPKAKTERAV (122 aa).

This sequence belongs to the alpha-IPM synthase/homocitrate synthase family. LeuA type 1 subfamily. In terms of assembly, homodimer. The cofactor is Mn(2+).

The protein localises to the cytoplasm. The catalysed reaction is 3-methyl-2-oxobutanoate + acetyl-CoA + H2O = (2S)-2-isopropylmalate + CoA + H(+). It participates in amino-acid biosynthesis; L-leucine biosynthesis; L-leucine from 3-methyl-2-oxobutanoate: step 1/4. Catalyzes the condensation of the acetyl group of acetyl-CoA with 3-methyl-2-oxobutanoate (2-ketoisovalerate) to form 3-carboxy-3-hydroxy-4-methylpentanoate (2-isopropylmalate). The protein is 2-isopropylmalate synthase of Heliobacterium modesticaldum (strain ATCC 51547 / Ice1).